The primary structure comprises 179 residues: Shikimate kinase (179 aa).

An ATP-binding site is contributed by 14–19 (GAGKTT). Residue Thr-18 coordinates Mg(2+). The substrate site is built by Asp-36, Arg-60, and Gly-82. Arg-120 provides a ligand contact to ATP. Residue Arg-139 participates in substrate binding.

This sequence belongs to the shikimate kinase family. In terms of assembly, monomer. Requires Mg(2+) as cofactor.

It is found in the cytoplasm. It catalyses the reaction shikimate + ATP = 3-phosphoshikimate + ADP + H(+). It functions in the pathway metabolic intermediate biosynthesis; chorismate biosynthesis; chorismate from D-erythrose 4-phosphate and phosphoenolpyruvate: step 5/7. Catalyzes the specific phosphorylation of the 3-hydroxyl group of shikimic acid using ATP as a cosubstrate. The sequence is that of Shikimate kinase from Methylococcus capsulatus (strain ATCC 33009 / NCIMB 11132 / Bath).